Consider the following 332-residue polypeptide: Transaldolase (332 aa).

Catalysis depends on lysine 135, which acts as the Schiff-base intermediate with substrate.

This sequence belongs to the transaldolase family. Type 1 subfamily. As to quaternary structure, homodimer.

The protein resides in the cytoplasm. It carries out the reaction D-sedoheptulose 7-phosphate + D-glyceraldehyde 3-phosphate = D-erythrose 4-phosphate + beta-D-fructose 6-phosphate. Its pathway is carbohydrate degradation; pentose phosphate pathway; D-glyceraldehyde 3-phosphate and beta-D-fructose 6-phosphate from D-ribose 5-phosphate and D-xylulose 5-phosphate (non-oxidative stage): step 2/3. In terms of biological role, transaldolase is important for the balance of metabolites in the pentose-phosphate pathway. This is Transaldolase from Prochlorococcus marinus (strain NATL2A).